We begin with the raw amino-acid sequence, 595 residues long: 3-hydroxy-3-methylglutaryl-coenzyme A reductase 2 (595 aa).

An N-linked (GlcNAc...) asparagine glycan is attached at N35. 2 helical membrane passes run 48–68 (LPLY…MYFL) and 92–112 (AIVS…IGFV). Positions 113-183 (QTFVSRGNND…SPLITPASSE (71 aa)) are linker. Residue N121 is glycosylated (N-linked (GlcNAc...) asparagine). The catalytic stretch occupies residues 184–595 (EDEEIINSVV…KYNRSTKASS (412 aa)). The active-site Charge relay system is the E278. An N-linked (GlcNAc...) asparagine glycan is attached at N342. The active-site Charge relay system is K410. N455 is a glycosylation site (N-linked (GlcNAc...) asparagine). D486 serves as the catalytic Charge relay system. The Proton donor role is filled by H584. Residue N588 is glycosylated (N-linked (GlcNAc...) asparagine).

The protein belongs to the HMG-CoA reductase family. As to expression, expressed in young flowers and in mature sepals and ovaries.

It localises to the endoplasmic reticulum membrane. The catalysed reaction is (R)-mevalonate + 2 NADP(+) + CoA = (3S)-3-hydroxy-3-methylglutaryl-CoA + 2 NADPH + 2 H(+). It functions in the pathway metabolic intermediate biosynthesis; (R)-mevalonate biosynthesis; (R)-mevalonate from acetyl-CoA: step 3/3. Functionally, catalyzes the synthesis of mevalonate. The specific precursor of all isoprenoid compounds present in plants. The polypeptide is 3-hydroxy-3-methylglutaryl-coenzyme A reductase 2 (HMG2) (Solanum tuberosum (Potato)).